The chain runs to 236 residues: uncharacterized protein (236 aa).

This sequence to M.tuberculosis Rv2557.

This is an uncharacterized protein from Mycobacterium tuberculosis (strain CDC 1551 / Oshkosh).